A 138-amino-acid polypeptide reads, in one-letter code: Ribulose bisphosphate carboxylase small subunit (138 aa).

It belongs to the RuBisCO small chain family. In terms of assembly, heterohexadecamer of 8 large and 8 small subunits.

The protein resides in the plastid. Its subcellular location is the chloroplast. Its function is as follows. RuBisCO catalyzes two reactions: the carboxylation of D-ribulose 1,5-bisphosphate, the primary event in carbon dioxide fixation, as well as the oxidative fragmentation of the pentose substrate in the photorespiration process. Both reactions occur simultaneously and in competition at the same active site. Although the small subunit is not catalytic it is essential for maximal activity. Carbon dioxide and oxygen bind in the same pocket of the enzyme in a similar manner. This chain is Ribulose bisphosphate carboxylase small subunit, found in Galdieria sulphuraria (Red alga).